A 204-amino-acid chain; its full sequence is Peptide deformylase (204 aa).

Fe cation is bound by residues Cys131 and His174. Residue Glu175 is part of the active site. His178 provides a ligand contact to Fe cation.

The protein belongs to the polypeptide deformylase family. Requires Fe(2+) as cofactor.

The enzyme catalyses N-terminal N-formyl-L-methionyl-[peptide] + H2O = N-terminal L-methionyl-[peptide] + formate. In terms of biological role, removes the formyl group from the N-terminal Met of newly synthesized proteins. Requires at least a dipeptide for an efficient rate of reaction. N-terminal L-methionine is a prerequisite for activity but the enzyme has broad specificity at other positions. In Streptococcus equi subsp. zooepidemicus (strain MGCS10565), this protein is Peptide deformylase.